The primary structure comprises 440 residues: D-serine dehydratase (440 aa).

Lysine 116 is modified (N6-(pyridoxal phosphate)lysine).

It belongs to the serine/threonine dehydratase family. DsdA subfamily. As to quaternary structure, monomer. Pyridoxal 5'-phosphate is required as a cofactor.

It catalyses the reaction D-serine = pyruvate + NH4(+). This chain is D-serine dehydratase, found in Salmonella schwarzengrund (strain CVM19633).